The primary structure comprises 223 residues: Imidazoleglycerol-phosphate dehydratase (223 aa).

This sequence belongs to the imidazoleglycerol-phosphate dehydratase family.

The catalysed reaction is D-erythro-1-(imidazol-4-yl)glycerol 3-phosphate = 3-(imidazol-4-yl)-2-oxopropyl phosphate + H2O. It participates in amino-acid biosynthesis; L-histidine biosynthesis; L-histidine from 5-phospho-alpha-D-ribose 1-diphosphate: step 6/9. This Candida albicans (Yeast) protein is Imidazoleglycerol-phosphate dehydratase (HIS3).